The sequence spans 393 residues: Acetylornithine aminotransferase 1 (393 aa).

Arg131 contributes to the N(2)-acetyl-L-ornithine binding site. 215-218 provides a ligand contact to pyridoxal 5'-phosphate; that stretch reads DEVQ. Lys244 bears the N6-(pyridoxal phosphate)lysine mark. Thr272 contacts N(2)-acetyl-L-ornithine. Pyridoxal 5'-phosphate is bound at residue Thr273.

It belongs to the class-III pyridoxal-phosphate-dependent aminotransferase family. ArgD subfamily. As to quaternary structure, homodimer. The cofactor is pyridoxal 5'-phosphate.

It localises to the cytoplasm. It carries out the reaction N(2)-acetyl-L-ornithine + 2-oxoglutarate = N-acetyl-L-glutamate 5-semialdehyde + L-glutamate. Its pathway is amino-acid biosynthesis; L-arginine biosynthesis; N(2)-acetyl-L-ornithine from L-glutamate: step 4/4. This chain is Acetylornithine aminotransferase 1, found in Bordetella bronchiseptica (strain ATCC BAA-588 / NCTC 13252 / RB50) (Alcaligenes bronchisepticus).